A 65-amino-acid chain; its full sequence is MFDSLAKAGKYLGQAAKLMIGMPDYDNYVEHMRVNHPDQTPMTYEEFFRERQDARYGGKGGARCC.

To E.coli YjiX.

This is an uncharacterized protein from Escherichia coli O6:H1 (strain CFT073 / ATCC 700928 / UPEC).